The sequence spans 426 residues: Histidine--tRNA ligase (426 aa).

This sequence belongs to the class-II aminoacyl-tRNA synthetase family. As to quaternary structure, homodimer.

The protein localises to the cytoplasm. The enzyme catalyses tRNA(His) + L-histidine + ATP = L-histidyl-tRNA(His) + AMP + diphosphate + H(+). The protein is Histidine--tRNA ligase of Streptococcus pyogenes serotype M6 (strain ATCC BAA-946 / MGAS10394).